A 607-amino-acid polypeptide reads, in one-letter code: Glutamine--fructose-6-phosphate aminotransferase [isomerizing] (607 aa).

The Nucleophile; for GATase activity role is filled by cysteine 2. Residues 2–217 (CGIIGIIGND…DGDWAVLTRN (216 aa)) form the Glutamine amidotransferase type-2 domain. 2 SIS domains span residues 283–422 (IGID…ARGA) and 455–597 (VCHD…VDQP). The For Fru-6P isomerization activity role is filled by lysine 602.

As to quaternary structure, homodimer.

It localises to the cytoplasm. The enzyme catalyses D-fructose 6-phosphate + L-glutamine = D-glucosamine 6-phosphate + L-glutamate. In terms of biological role, catalyzes the first step in hexosamine metabolism, converting fructose-6P into glucosamine-6P using glutamine as a nitrogen source. This is Glutamine--fructose-6-phosphate aminotransferase [isomerizing] from Brucella melitensis biotype 1 (strain ATCC 23456 / CCUG 17765 / NCTC 10094 / 16M).